Here is a 528-residue protein sequence, read N- to C-terminus: ATP synthase subunit alpha (528 aa).

Residue 169–176 (GDRQTGKT) coordinates ATP.

Belongs to the ATPase alpha/beta chains family. In terms of assembly, F-type ATPases have 2 components, CF(1) - the catalytic core - and CF(0) - the membrane proton channel. CF(1) has five subunits: alpha(3), beta(3), gamma(1), delta(1), epsilon(1). CF(0) has three main subunits: a(1), b(2) and c(9-12). The alpha and beta chains form an alternating ring which encloses part of the gamma chain. CF(1) is attached to CF(0) by a central stalk formed by the gamma and epsilon chains, while a peripheral stalk is formed by the delta and b chains.

Its subcellular location is the cell membrane. The enzyme catalyses ATP + H2O + 4 H(+)(in) = ADP + phosphate + 5 H(+)(out). Functionally, produces ATP from ADP in the presence of a proton gradient across the membrane. The alpha chain is a regulatory subunit. This chain is ATP synthase subunit alpha, found in Mycoplasmopsis agalactiae (strain NCTC 10123 / CIP 59.7 / PG2) (Mycoplasma agalactiae).